The sequence spans 508 residues: ATP synthase subunit alpha, chloroplastic (508 aa).

173–180 (GDRQTGKT) contacts ATP.

Belongs to the ATPase alpha/beta chains family. F-type ATPases have 2 components, CF(1) - the catalytic core - and CF(0) - the membrane proton channel. CF(1) has five subunits: alpha(3), beta(3), gamma(1), delta(1), epsilon(1). CF(0) has four main subunits: a, b, b' and c.

It is found in the plastid. The protein localises to the chloroplast thylakoid membrane. The enzyme catalyses ATP + H2O + 4 H(+)(in) = ADP + phosphate + 5 H(+)(out). Its function is as follows. Produces ATP from ADP in the presence of a proton gradient across the membrane. The alpha chain is a regulatory subunit. The polypeptide is ATP synthase subunit alpha, chloroplastic (Chara vulgaris (Common stonewort)).